A 48-amino-acid chain; its full sequence is MRKKIILICEHCLNRNYTTTRSKLETTRLVLNKYCSSCNQKTVHKESH.

The protein belongs to the bacterial ribosomal protein bL33 family.

The polypeptide is Large ribosomal subunit protein bL33B (rpmG 2) (Mycoplasmoides gallisepticum (strain R(low / passage 15 / clone 2)) (Mycoplasma gallisepticum)).